Here is a 190-residue protein sequence, read N- to C-terminus: Hypoxanthine/guanine phosphoribosyltransferase (190 aa).

The protein belongs to the purine/pyrimidine phosphoribosyltransferase family. Archaeal HPRT subfamily. Homodimer.

The protein localises to the cytoplasm. The enzyme catalyses IMP + diphosphate = hypoxanthine + 5-phospho-alpha-D-ribose 1-diphosphate. The catalysed reaction is GMP + diphosphate = guanine + 5-phospho-alpha-D-ribose 1-diphosphate. It functions in the pathway purine metabolism; IMP biosynthesis via salvage pathway; IMP from hypoxanthine: step 1/1. In terms of biological role, catalyzes a salvage reaction resulting in the formation of IMP that is energically less costly than de novo synthesis. This Methanosarcina barkeri (strain Fusaro / DSM 804) protein is Hypoxanthine/guanine phosphoribosyltransferase.